The primary structure comprises 74 residues: MLVFYAILFVTVFSNTVMGATIDKPIPKPIFREAIEEMEVNKRAKNPYCKEEKCPVGKHCPKKPIVCRIGPCCV.

Residues 1 to 19 form the signal peptide; that stretch reads MLVFYAILFVTVFSNTVMG. Positions 20–41 are excised as a propeptide; it reads ATIDKPIPKPIFREAIEEMEVN.

This sequence belongs to the scoloptoxin-07 family. Contains 3 disulfide bonds. Expressed by the venom gland.

Its subcellular location is the secreted. In terms of biological role, inhibits voltage-gated potassium channels. This is Kappa-scoloptoxin(07)-Ssm2f from Scolopendra mutilans (Chinese red-headed centipede).